Consider the following 598-residue polypeptide: Aspartate--tRNA(Asp/Asn) ligase (598 aa).

E175 provides a ligand contact to L-aspartate. The aspartate stretch occupies residues 199–202 (QQFK). L-aspartate contacts are provided by R221 and H452. ATP is bound at residue 221–223 (RDE). Residue E486 coordinates ATP. R493 is an L-aspartate binding site. Residue 538–541 (GVDR) coordinates ATP.

The protein belongs to the class-II aminoacyl-tRNA synthetase family. Type 1 subfamily. In terms of assembly, homodimer.

The protein resides in the cytoplasm. The enzyme catalyses tRNA(Asx) + L-aspartate + ATP = L-aspartyl-tRNA(Asx) + AMP + diphosphate. Aspartyl-tRNA synthetase with relaxed tRNA specificity since it is able to aspartylate not only its cognate tRNA(Asp) but also tRNA(Asn). Reaction proceeds in two steps: L-aspartate is first activated by ATP to form Asp-AMP and then transferred to the acceptor end of tRNA(Asp/Asn). The sequence is that of Aspartate--tRNA(Asp/Asn) ligase from Gluconobacter oxydans (strain 621H) (Gluconobacter suboxydans).